The chain runs to 295 residues: Ethanolamine ammonia-lyase small subunit (295 aa).

Adenosylcob(III)alamin contacts are provided by Val207, Glu228, and Cys258.

The protein belongs to the EutC family. The basic unit is a heterodimer which dimerizes to form tetramers. The heterotetramers trimerize; 6 large subunits form a core ring with 6 small subunits projecting outwards. Requires adenosylcob(III)alamin as cofactor.

It is found in the bacterial microcompartment. The enzyme catalyses ethanolamine = acetaldehyde + NH4(+). The protein operates within amine and polyamine degradation; ethanolamine degradation. In terms of biological role, catalyzes the deamination of various vicinal amino-alcohols to oxo compounds. Allows this organism to utilize ethanolamine as the sole source of nitrogen and carbon in the presence of external vitamin B12. This Escherichia coli O157:H7 protein is Ethanolamine ammonia-lyase small subunit.